The sequence spans 466 residues: Asparagine--tRNA ligase (466 aa).

The protein belongs to the class-II aminoacyl-tRNA synthetase family. Homodimer.

The protein localises to the cytoplasm. It carries out the reaction tRNA(Asn) + L-asparagine + ATP = L-asparaginyl-tRNA(Asn) + AMP + diphosphate + H(+). This chain is Asparagine--tRNA ligase, found in Pectobacterium atrosepticum (strain SCRI 1043 / ATCC BAA-672) (Erwinia carotovora subsp. atroseptica).